The sequence spans 115 residues: Ribonuclease P protein component (115 aa).

This sequence belongs to the RnpA family. In terms of assembly, consists of a catalytic RNA component (M1 or rnpB) and a protein subunit.

The catalysed reaction is Endonucleolytic cleavage of RNA, removing 5'-extranucleotides from tRNA precursor.. In terms of biological role, RNaseP catalyzes the removal of the 5'-leader sequence from pre-tRNA to produce the mature 5'-terminus. It can also cleave other RNA substrates such as 4.5S RNA. The protein component plays an auxiliary but essential role in vivo by binding to the 5'-leader sequence and broadening the substrate specificity of the ribozyme. In Staphylococcus epidermidis (strain ATCC 35984 / DSM 28319 / BCRC 17069 / CCUG 31568 / BM 3577 / RP62A), this protein is Ribonuclease P protein component.